The sequence spans 153 residues: Small ribosomal subunit protein uS13 (153 aa).

Positions 134–153 (GQRTKSNGRRGRSMGVSRKK) are disordered.

Belongs to the universal ribosomal protein uS13 family.

It is found in the cytoplasm. Its function is as follows. Located at the top of the head of the 40S subunit, it contacts several helices of the 18S rRNA. This Encephalitozoon cuniculi (strain GB-M1) (Microsporidian parasite) protein is Small ribosomal subunit protein uS13 (RPS18).